The sequence spans 437 residues: Phosphomethylpyrimidine synthase (437 aa).

Residues Asn69, Met98, Tyr127, His163, 185-187 (SRG), 226-229 (DACR), and Glu265 each bind substrate. Residue His269 participates in Zn(2+) binding. Tyr292 contributes to the substrate binding site. Position 333 (His333) interacts with Zn(2+). Cys409, Cys412, and Cys416 together coordinate [4Fe-4S] cluster.

Belongs to the ThiC family. [4Fe-4S] cluster serves as cofactor.

It carries out the reaction 5-amino-1-(5-phospho-beta-D-ribosyl)imidazole + S-adenosyl-L-methionine = 4-amino-2-methyl-5-(phosphooxymethyl)pyrimidine + CO + 5'-deoxyadenosine + formate + L-methionine + 3 H(+). It functions in the pathway cofactor biosynthesis; thiamine diphosphate biosynthesis. Catalyzes the synthesis of the hydroxymethylpyrimidine phosphate (HMP-P) moiety of thiamine from aminoimidazole ribotide (AIR) in a radical S-adenosyl-L-methionine (SAM)-dependent reaction. This is Phosphomethylpyrimidine synthase from Clostridium botulinum (strain Okra / Type B1).